A 236-amino-acid chain; its full sequence is Small ribosomal subunit protein uS3 (236 aa).

The KH type-2 domain maps to 39–107 (IREILHKELK…DVVINIVEIR (69 aa)). Residues 213 to 236 (MAQDKRMNEGGGESPSPRSRRDAA) form a disordered region.

The protein belongs to the universal ribosomal protein uS3 family. Part of the 30S ribosomal subunit. Forms a tight complex with proteins S10 and S14.

Its function is as follows. Binds the lower part of the 30S subunit head. Binds mRNA in the 70S ribosome, positioning it for translation. This Bradyrhizobium sp. (strain ORS 278) protein is Small ribosomal subunit protein uS3.